A 247-amino-acid polypeptide reads, in one-letter code: ATP synthase subunit a (247 aa).

The next 6 helical transmembrane spans lie at 24-44 (IAFT…AAMM), 82-102 (FFPL…VGII), 112-132 (IIVT…YGFY), 141-161 (LFVP…IEII), 181-201 (GHVT…LGFV), and 206-226 (ALLP…VAFL).

Belongs to the ATPase A chain family. As to quaternary structure, F-type ATPases have 2 components, CF(1) - the catalytic core - and CF(0) - the membrane proton channel. CF(1) has five subunits: alpha(3), beta(3), gamma(1), delta(1), epsilon(1). CF(0) has four main subunits: a, b, b' and c.

The protein resides in the cell inner membrane. Functionally, key component of the proton channel; it plays a direct role in the translocation of protons across the membrane. The protein is ATP synthase subunit a of Bradyrhizobium sp. (strain ORS 278).